A 506-amino-acid polypeptide reads, in one-letter code: Glutamate--tRNA ligase (506 aa).

The short motif at 9-19 is the 'HIGH' region element; that stretch reads PSPTGFQHIGG. Residues 251-255 carry the 'KMSKS' region motif; it reads KLSKR. Lys-254 serves as a coordination point for ATP.

This sequence belongs to the class-I aminoacyl-tRNA synthetase family. Glutamate--tRNA ligase type 1 subfamily. In terms of assembly, monomer.

It localises to the cytoplasm. It carries out the reaction tRNA(Glu) + L-glutamate + ATP = L-glutamyl-tRNA(Glu) + AMP + diphosphate. Its function is as follows. Catalyzes the attachment of glutamate to tRNA(Glu) in a two-step reaction: glutamate is first activated by ATP to form Glu-AMP and then transferred to the acceptor end of tRNA(Glu). In Treponema denticola (strain ATCC 35405 / DSM 14222 / CIP 103919 / JCM 8153 / KCTC 15104), this protein is Glutamate--tRNA ligase.